The chain runs to 169 residues: uncharacterized protein (169 aa).

Disordered stretches follow at residues valine 32–proline 53 and valine 148–alanine 169.

This is an uncharacterized protein from Homo sapiens (Human).